Here is a 342-residue protein sequence, read N- to C-terminus: Methionyl-tRNA formyltransferase (342 aa).

Residue 110–113 (SLLP) participates in (6S)-5,6,7,8-tetrahydrofolate binding.

The protein belongs to the Fmt family.

The enzyme catalyses L-methionyl-tRNA(fMet) + (6R)-10-formyltetrahydrofolate = N-formyl-L-methionyl-tRNA(fMet) + (6S)-5,6,7,8-tetrahydrofolate + H(+). Functionally, attaches a formyl group to the free amino group of methionyl-tRNA(fMet). The formyl group appears to play a dual role in the initiator identity of N-formylmethionyl-tRNA by promoting its recognition by IF2 and preventing the misappropriation of this tRNA by the elongation apparatus. The chain is Methionyl-tRNA formyltransferase from Synechococcus sp. (strain CC9311).